A 253-amino-acid chain; its full sequence is MQGQNQQQAYDRGITIFSPDGRLYQVEYAREAVKRGTASIGVRTPEGVVLVVDKQTRSPLLEGSSVEKLHKIDDHVGAASAGHVADARQLVDFARQQSQVERVRYDEPIGVRTLTKSVTDHIQQYTQVGGARPFGVALLIAGVEGGEPRLFETDPSGTSNEWKAVAIGSNRGDIQEFLEDEYDAGLSVDDGIDLALRALNEGREDALSGDGVGVGIVDADTGTYRELAADESQSYIDDIEDAADDSDDDDDEE.

Positions 229-253 are disordered; it reads ADESQSYIDDIEDAADDSDDDDDEE. Residues 237–253 are compositionally biased toward acidic residues; it reads DDIEDAADDSDDDDDEE.

The protein belongs to the peptidase T1A family. In terms of assembly, the 20S proteasome core is composed of 14 alpha and 14 beta subunits that assemble into four stacked heptameric rings, resulting in a barrel-shaped structure. The two inner rings, each composed of seven catalytic beta subunits, are sandwiched by two outer rings, each composed of seven alpha subunits. The catalytic chamber with the active sites is on the inside of the barrel. Has a gated structure, the ends of the cylinder being occluded by the N-termini of the alpha-subunits. Is capped at one or both ends by the proteasome regulatory ATPase, PAN.

Its subcellular location is the cytoplasm. Its activity is regulated as follows. The formation of the proteasomal ATPase PAN-20S proteasome complex, via the docking of the C-termini of PAN into the intersubunit pockets in the alpha-rings, triggers opening of the gate for substrate entry. Interconversion between the open-gate and close-gate conformations leads to a dynamic regulation of the 20S proteasome proteolysis activity. Its function is as follows. Component of the proteasome core, a large protease complex with broad specificity involved in protein degradation. The chain is Proteasome subunit alpha from Halobacterium salinarum (strain ATCC 29341 / DSM 671 / R1).